The following is a 244-amino-acid chain: tRNA (guanine-N(1)-)-methyltransferase (244 aa).

Residues glycine 120 and 140-145 contribute to the S-adenosyl-L-methionine site; that span reads IGDYIL.

The protein belongs to the RNA methyltransferase TrmD family. Homodimer.

Its subcellular location is the cytoplasm. The catalysed reaction is guanosine(37) in tRNA + S-adenosyl-L-methionine = N(1)-methylguanosine(37) in tRNA + S-adenosyl-L-homocysteine + H(+). In terms of biological role, specifically methylates guanosine-37 in various tRNAs. This chain is tRNA (guanine-N(1)-)-methyltransferase, found in Brucella canis (strain ATCC 23365 / NCTC 10854 / RM-666).